Here is a 108-residue protein sequence, read N- to C-terminus: MKPDFEKGDGLLTTVVTDADTKDVLMVAWMNAESYQRTLASGQTWFWSRSRQELWHKGATSGNLQDVVSMTLDCDQDTLLVAVHPHGPACHTGHTSCFFNPVELEQGA.

Aspartate 73 provides a ligand contact to Mg(2+). Residue cysteine 74 coordinates Zn(2+). Aspartate 75 and aspartate 77 together coordinate Mg(2+). Residues cysteine 90 and cysteine 97 each coordinate Zn(2+).

This sequence belongs to the PRA-CH family. As to quaternary structure, homodimer. It depends on Mg(2+) as a cofactor. Requires Zn(2+) as cofactor.

The protein localises to the cytoplasm. It carries out the reaction 1-(5-phospho-beta-D-ribosyl)-5'-AMP + H2O = 1-(5-phospho-beta-D-ribosyl)-5-[(5-phospho-beta-D-ribosylamino)methylideneamino]imidazole-4-carboxamide. It participates in amino-acid biosynthesis; L-histidine biosynthesis; L-histidine from 5-phospho-alpha-D-ribose 1-diphosphate: step 3/9. Functionally, catalyzes the hydrolysis of the adenine ring of phosphoribosyl-AMP. This Lactiplantibacillus plantarum (strain ATCC BAA-793 / NCIMB 8826 / WCFS1) (Lactobacillus plantarum) protein is Phosphoribosyl-AMP cyclohydrolase.